The following is a 573-amino-acid chain: Potassium-transporting ATPase potassium-binding subunit (573 aa).

10 helical membrane passes run 6-26 (ILFALFIVTIALITKPLGSYI), 66-86 (FFSLVSFSVMAFIFVLVILLL), 135-155 (ALAVQNFVSAAVGLCVAIALI), 177-197 (VFWILLPISIVIAIVYIFQGV), 257-277 (IQMVSIFAIAAALTYTFGKWV), 283-303 (GWLIFGVMLVLFIISLVVMTI), 382-402 (IFGGVGAGFYGFFMFLMLAVF), 428-448 (MFALLIFPCCVLVFTGLAAVI), 493-513 (ITIALSMLIGRFGVIFAVIML), and 537-557 (FIFAILVFFTILLIGGLTIFP).

Belongs to the KdpA family. In terms of assembly, the system is composed of three essential subunits: KdpA, KdpB and KdpC.

It localises to the cell inner membrane. In terms of biological role, part of the high-affinity ATP-driven potassium transport (or Kdp) system, which catalyzes the hydrolysis of ATP coupled with the electrogenic transport of potassium into the cytoplasm. This subunit binds the periplasmic potassium ions and delivers the ions to the membrane domain of KdpB through an intramembrane tunnel. The protein is Potassium-transporting ATPase potassium-binding subunit of Francisella tularensis subsp. holarctica (strain FTNF002-00 / FTA).